The primary structure comprises 456 residues: METIKKNEVKTGKVIDLTHEGHGVVKVDRYPIFIPNALIDEEIKFKLIKVKKNFAIGKLIEVISESDDRVTPPCIYYAKCGGCQLQHMTYRAQLDMKREQVVNLFHRKGPFENTVIKETIGMVNPWRYRNKSQIPVGQSNSNQVIMGFYRQRSHDIIDMDSCLIQDRQHQEVMNRVKYWLNELNISIYNEKTKTGLIRHLVVRTGYHTDEMMVIFVTNGATFKQSELLVNKLKKEFPNITSIKQNINNSHSNVIMGRQSMTLYGKDKIEDQLSEVTYHISDLSFYQINSSQTEKLYQQALNYAQLTGKEIVLDTYCGIGTIGLYMAPLAKHVYGVEVVPQAIKDAEDNATKNQLKNTTFECGKAEDVILTWKSQGIKPDVVMVDPPRKGCDETFLTTLLKLNPKRIVYISCNPSTQQRDAQILAEQYELVEITPVDMFPQTTHIETVALFVRKEEE.

Positions 3–61 constitute a TRAM domain; the sequence is TIKKNEVKTGKVIDLTHEGHGVVKVDRYPIFIPNALIDEEIKFKLIKVKKNFAIGKLIE. Residues C74, C80, C83, and C162 each contribute to the [4Fe-4S] cluster site. S-adenosyl-L-methionine contacts are provided by Q286, Y315, E336, and D384. C411 functions as the Nucleophile in the catalytic mechanism.

This sequence belongs to the class I-like SAM-binding methyltransferase superfamily. RNA M5U methyltransferase family.

This is an uncharacterized protein from Staphylococcus epidermidis (strain ATCC 12228 / FDA PCI 1200).